Here is a 467-residue protein sequence, read N- to C-terminus: NADH-quinone oxidoreductase subunit H (467 aa).

9 helical membrane passes run 18 to 38, 88 to 108, 131 to 151, 172 to 192, 206 to 226, 256 to 276, 296 to 316, 328 to 348, and 363 to 383; these read WWLVVIKAVFCFAFLMVTVLF, AVYVLAPIVAAIPAFMAIAVI, LPIAMLFILAVASVGIYGIVL, MISYEIAMGAAFASVFLYSGS, WYIVLLPVSFILYIVTMVGET, FMLAEYVNMVTVSAVATTLFL, WWPLLWFVVKVQLLLFFFIWL, LMKLGWKVLIPVSLVWLMLVA, and IALYIGGGVLVLLLLSFLVDM. Positions 389-467 are disordered; it reads GKAADQPAET…PTDGKEASDG (79 aa). A compositionally biased stretch (pro residues) spans 418–430; the sequence is PVPPMPGQQVPPV.

Belongs to the complex I subunit 1 family. As to quaternary structure, NDH-1 is composed of 14 different subunits. Subunits NuoA, H, J, K, L, M, N constitute the membrane sector of the complex.

It is found in the cell membrane. It catalyses the reaction a quinone + NADH + 5 H(+)(in) = a quinol + NAD(+) + 4 H(+)(out). Functionally, NDH-1 shuttles electrons from NADH, via FMN and iron-sulfur (Fe-S) centers, to quinones in the respiratory chain. The immediate electron acceptor for the enzyme in this species is believed to be ubiquinone. Couples the redox reaction to proton translocation (for every two electrons transferred, four hydrogen ions are translocated across the cytoplasmic membrane), and thus conserves the redox energy in a proton gradient. This subunit may bind ubiquinone. The polypeptide is NADH-quinone oxidoreductase subunit H (Streptomyces coelicolor (strain ATCC BAA-471 / A3(2) / M145)).